The chain runs to 555 residues: uncharacterized protein (555 aa).

Positions 1–28 are cleaved as a signal peptide; the sequence is MRSGLFGVLRWTAVGLVATLVASLALTA. Residue C29 is the site of N-palmitoyl cysteine attachment. Residue C29 is the site of S-diacylglycerol cysteine attachment.

To M.tuberculosis Rv2585c and M.bovis Mb2616c.

Its subcellular location is the cell membrane. This is an uncharacterized protein from Mycobacterium leprae (strain TN).